Reading from the N-terminus, the 92-residue chain is Acylphosphatase (92 aa).

One can recognise an Acylphosphatase-like domain in the interval 5–92; the sequence is RAHVVVSGKV…GEFSGFKIAF (88 aa). Catalysis depends on residues Arg20 and Asn38.

It belongs to the acylphosphatase family.

The catalysed reaction is an acyl phosphate + H2O = a carboxylate + phosphate + H(+). The polypeptide is Acylphosphatase (acyP) (Pelotomaculum thermopropionicum (strain DSM 13744 / JCM 10971 / SI)).